The following is a 377-amino-acid chain: Glutamate 5-kinase (377 aa).

Position 17 (Lys-17) interacts with ATP. Substrate is bound by residues Ser-56, Asp-143, and Asn-155. 217–223 (SGGMFSK) provides a ligand contact to ATP. The PUA domain occupies 282-360 (AGDLVIDDGA…CEIESILGKC (79 aa)).

It belongs to the glutamate 5-kinase family.

Its subcellular location is the cytoplasm. The enzyme catalyses L-glutamate + ATP = L-glutamyl 5-phosphate + ADP. It participates in amino-acid biosynthesis; L-proline biosynthesis; L-glutamate 5-semialdehyde from L-glutamate: step 1/2. Functionally, catalyzes the transfer of a phosphate group to glutamate to form L-glutamate 5-phosphate. In Maridesulfovibrio salexigens (strain ATCC 14822 / DSM 2638 / NCIMB 8403 / VKM B-1763) (Desulfovibrio salexigens), this protein is Glutamate 5-kinase.